The sequence spans 504 residues: Probable protein phosphatase 2C 18 (504 aa).

The segment at 1 to 49 (MGLCYSVDRTTGKEPGEASSTATTAETVEERSGSGRWRRPRDLKGGGDI) is disordered. Residues 17–26 (EASSTATTAE) show a composition bias toward low complexity. The PPM-type phosphatase domain maps to 67-399 (IACLYTQQGK…DDCTVVCLFL (333 aa)). The Mn(2+) site is built by Asp-103, Gly-104, Asp-344, and Asp-390. The interval 410 to 435 (TNVKKDSPKEESIESVTNSTSKEEDE) is disordered. The segment covering 412–421 (VKKDSPKEES) has biased composition (basic and acidic residues).

It belongs to the PP2C family. Mg(2+) is required as a cofactor. Mn(2+) serves as cofactor.

The enzyme catalyses O-phospho-L-seryl-[protein] + H2O = L-seryl-[protein] + phosphate. It carries out the reaction O-phospho-L-threonyl-[protein] + H2O = L-threonyl-[protein] + phosphate. In Arabidopsis thaliana (Mouse-ear cress), this protein is Probable protein phosphatase 2C 18.